The following is a 347-amino-acid chain: Histidinol-phosphate aminotransferase (347 aa).

The residue at position 209 (lysine 209) is an N6-(pyridoxal phosphate)lysine.

This sequence belongs to the class-II pyridoxal-phosphate-dependent aminotransferase family. Histidinol-phosphate aminotransferase subfamily. As to quaternary structure, homodimer. Requires pyridoxal 5'-phosphate as cofactor.

The catalysed reaction is L-histidinol phosphate + 2-oxoglutarate = 3-(imidazol-4-yl)-2-oxopropyl phosphate + L-glutamate. The protein operates within amino-acid biosynthesis; L-histidine biosynthesis; L-histidine from 5-phospho-alpha-D-ribose 1-diphosphate: step 7/9. In Syntrophotalea carbinolica (strain DSM 2380 / NBRC 103641 / GraBd1) (Pelobacter carbinolicus), this protein is Histidinol-phosphate aminotransferase.